The primary structure comprises 537 residues: Probable metalloreductase AIM14 (537 aa).

Transmembrane regions (helical) follow at residues 20-40 (GFFIFALTIIQTIFFLQVKFI), 58-78 (ITNPPIWLMVTVWLLIVIFTG), 95-112 (RYGRMAYCLIPLNIYLVL), 133-155 (KWTSRIIVFCSTIHAAGYVYKWI), 167-187 (FLNLLGVVVFVFLVVLAIISI), 194-216 (VYSTFYLIHNVTAWSMVILITFH), and 221-238 (VTVFAVISLILLGYQLYL). One can recognise a Ferric oxidoreductase domain in the interval 97-213 (GRMAYCLIPL…VTAWSMVILI (117 aa)). Positions 187–363 (IRPFRRKVYS…GGSGISLGLP (177 aa)) constitute an FAD-binding FR-type domain. The tract at residues 432–475 (EEQGHGLLNNDNENGIELQNMPKTNEESSEANSTNSKNNKDNQE) is disordered.

It belongs to the ferric reductase (FRE) family. AIM14 subfamily.

It is found in the membrane. Probable cell surface metalloreductase. May be involved in iron or copper homeostasis. In Candida dubliniensis (strain CD36 / ATCC MYA-646 / CBS 7987 / NCPF 3949 / NRRL Y-17841) (Yeast), this protein is Probable metalloreductase AIM14 (AIM14).